The chain runs to 257 residues: Thiazole synthase (257 aa).

The Schiff-base intermediate with DXP role is filled by Lys98. 1-deoxy-D-xylulose 5-phosphate contacts are provided by residues Gly159, 185–186 (AG), and 207–208 (NT).

It belongs to the ThiG family. As to quaternary structure, homotetramer. Forms heterodimers with either ThiH or ThiS.

It localises to the cytoplasm. The enzyme catalyses [ThiS sulfur-carrier protein]-C-terminal-Gly-aminoethanethioate + 2-iminoacetate + 1-deoxy-D-xylulose 5-phosphate = [ThiS sulfur-carrier protein]-C-terminal Gly-Gly + 2-[(2R,5Z)-2-carboxy-4-methylthiazol-5(2H)-ylidene]ethyl phosphate + 2 H2O + H(+). It participates in cofactor biosynthesis; thiamine diphosphate biosynthesis. Its function is as follows. Catalyzes the rearrangement of 1-deoxy-D-xylulose 5-phosphate (DXP) to produce the thiazole phosphate moiety of thiamine. Sulfur is provided by the thiocarboxylate moiety of the carrier protein ThiS. In vitro, sulfur can be provided by H(2)S. The sequence is that of Thiazole synthase from Anaeromyxobacter dehalogenans (strain 2CP-1 / ATCC BAA-258).